A 784-amino-acid polypeptide reads, in one-letter code: LPS-assembly protein LptD (784 aa).

The first 24 residues, 1–24, serve as a signal peptide directing secretion; sequence MKKRIPTLLATMIASALYSHQGLA. Cystine bridges form between Cys-31–Cys-724 and Cys-173–Cys-725.

Belongs to the LptD family. Component of the lipopolysaccharide transport and assembly complex. Interacts with LptE and LptA. In terms of processing, contains two intramolecular disulfide bonds.

The protein resides in the cell outer membrane. Its function is as follows. Together with LptE, is involved in the assembly of lipopolysaccharide (LPS) at the surface of the outer membrane. In Salmonella typhi, this protein is LPS-assembly protein LptD.